The primary structure comprises 291 residues: Pyridoxal 5'-phosphate synthase subunit PdxS (291 aa).

D23 serves as a coordination point for D-ribose 5-phosphate. Catalysis depends on K80, which acts as the Schiff-base intermediate with D-ribose 5-phosphate. G152 contributes to the D-ribose 5-phosphate binding site. R164 serves as a coordination point for D-glyceraldehyde 3-phosphate. D-ribose 5-phosphate is bound by residues G213 and 234-235; that span reads GS.

It belongs to the PdxS/SNZ family. In the presence of PdxT, forms a dodecamer of heterodimers.

It carries out the reaction aldehydo-D-ribose 5-phosphate + D-glyceraldehyde 3-phosphate + L-glutamine = pyridoxal 5'-phosphate + L-glutamate + phosphate + 3 H2O + H(+). It participates in cofactor biosynthesis; pyridoxal 5'-phosphate biosynthesis. Catalyzes the formation of pyridoxal 5'-phosphate from ribose 5-phosphate (RBP), glyceraldehyde 3-phosphate (G3P) and ammonia. The ammonia is provided by the PdxT subunit. Can also use ribulose 5-phosphate and dihydroxyacetone phosphate as substrates, resulting from enzyme-catalyzed isomerization of RBP and G3P, respectively. The polypeptide is Pyridoxal 5'-phosphate synthase subunit PdxS (Bifidobacterium longum (strain NCC 2705)).